The chain runs to 760 residues: Catecholate siderophore receptor Fiu (760 aa).

The first 31 residues, 1–31, serve as a signal peptide directing secretion; it reads MENNRNFPARQFHSLTFFAGLCIGITPVAQA. The 109-residue stretch at 67 to 175 folds into the TBDR plug domain; that stretch reads PVADTTRTMT…PTGSINMISK (109 aa). A TBDR beta-barrel domain is found at 180 to 760; the sequence is DSGIDASASI…TFLLTANMHF (581 aa). A TonB C-terminal box motif is present at residues 743–760; that stretch reads RYHPGEPRTFLLTANMHF.

Belongs to the TonB-dependent receptor family.

It is found in the cell outer membrane. Functionally, involved in the active transport across the outer membrane of iron complexed with catecholate siderophores such as dihydroxybenzoylserine and dihydroxybenzoate. It derives its energy for transport by interacting with the trans-periplasmic membrane protein TonB. Can also transport catechol-substituted cephalosporins. Receptor for microcins M, H47 and E492. This Escherichia coli (strain UTI89 / UPEC) protein is Catecholate siderophore receptor Fiu (fiu).